The sequence spans 261 residues: Chanoclavine-I dehydrogenase easD (261 aa).

The signal sequence occupies residues 1–20 (MPSMTSKVFAITGGASGIGA). Ile18 is an NADP(+) binding site. Asn43 carries N-linked (GlcNAc...) asparagine glycosylation. Asp66, Arg132, Tyr166, Lys170, and Thr201 together coordinate NADP(+). The active-site Proton donor is Tyr166. Catalysis depends on Lys170, which acts as the Lowers pKa of active site Tyr.

This sequence belongs to the short-chain dehydrogenases/reductases (SDR) family. In terms of assembly, homotetramer.

The catalysed reaction is chanoclavine-I + NAD(+) = chanoclavine-I aldehyde + NADH + H(+). Its pathway is alkaloid biosynthesis; ergot alkaloid biosynthesis. Chanoclavine-I dehydrogenase; part of the gene cluster that mediates the biosynthesis of fungal ergot alkaloid. DmaW catalyzes the first step of ergot alkaloid biosynthesis by condensing dimethylallyl diphosphate (DMAP) and tryptophan to form 4-dimethylallyl-L-tryptophan. The second step is catalyzed by the methyltransferase easF that methylates 4-dimethylallyl-L-tryptophan in the presence of S-adenosyl-L-methionine, resulting in the formation of 4-dimethylallyl-L-abrine. The catalase easC and the FAD-dependent oxidoreductase easE then transform 4-dimethylallyl-L-abrine to chanoclavine-I which is further oxidized by easD in the presence of NAD(+), resulting in the formation of chanoclavine-I aldehyde. Agroclavine dehydrogenase easG then mediates the conversion of chanoclavine-I aldehyde to agroclavine via a non-enzymatic adduct reaction: the substrate is an iminium intermediate that is formed spontaneously from chanoclavine-I aldehyde in the presence of glutathione. The presence of easA is not required to complete this reaction. Further conversion of agroclavine to paspalic acid is a two-step process involving oxidation of agroclavine to elymoclavine and of elymoclavine to paspalic acid, the second step being performed by the elymoclavine oxidase cloA. Paspalic acid is then further converted to D-lysergic acid. Ergopeptines are assembled from D-lysergic acid and three different amino acids by the D-lysergyl-peptide-synthetases composed each of a monomudular and a trimodular nonribosomal peptide synthetase subunit. LpsB and lpsC encode the monomodular subunits responsible for D-lysergic acid activation and incorporation into the ergopeptine backbone. LpsA1 and A2 subunits encode the trimodular nonribosomal peptide synthetase assembling the tripeptide portion of ergopeptines. LpsA1 is responsible for formation of the major ergopeptine, ergotamine, and lpsA2 for alpha-ergocryptine, the minor ergopeptine of the total alkaloid mixture elaborated by C.purpurea. D-lysergyl-tripeptides are assembled by the nonribosomal peptide synthetases and released as N-(D-lysergyl-aminoacyl)-lactams. Cyclolization of the D-lysergyl-tripeptides is performed by the Fe(2+)/2-ketoglutarate-dependent dioxygenase easH which introduces a hydroxyl group into N-(D-lysergyl-aminoacyl)-lactam at alpha-C of the aminoacyl residue followed by spontaneous condensation with the terminal lactam carbonyl group. In Claviceps purpurea (strain 20.1) (Ergot fungus), this protein is Chanoclavine-I dehydrogenase easD.